Consider the following 460-residue polypeptide: Proton extrusion protein PxcA (460 aa).

Residues 84–194 (RLPDPEQNGS…KTNLDNSNAP (111 aa)) are disordered. Over residues 114-136 (NDGKDAENGRQSRDPSILEKLEF) the composition is skewed to basic and acidic residues. The span at 167-194 (LTSSQPEPSDPSIKTNLAKTNLDNSNAP) shows a compositional bias: polar residues. A run of 4 helical transmembrane segments spans residues 242-262 (FLLLLAILPLLVQIFSKHFLF), 337-357 (GLKNVLADVLSLLVFGWLILI), 373-393 (IYGLSDSAKAFIIILFTDVFV), and 420-440 (FIYGFIATFPVFLDTLFKYWI).

The protein belongs to the CemA family.

It is found in the cell inner membrane. In terms of biological role, required for H(+) efflux immediately after light irradiation to form a rapid H(+) concentration gradient across the thylakoid membranes. Together with PxcL, contributes to transient H(+) uptake following dark to light transition. The chain is Proton extrusion protein PxcA from Synechococcus sp. (strain JA-3-3Ab) (Cyanobacteria bacterium Yellowstone A-Prime).